The chain runs to 154 residues: Ribosomal RNA large subunit methyltransferase H (154 aa).

S-adenosyl-L-methionine is bound by residues Leu-71 and Gly-103.

Belongs to the RNA methyltransferase RlmH family. As to quaternary structure, homodimer.

The protein localises to the cytoplasm. It catalyses the reaction pseudouridine(1915) in 23S rRNA + S-adenosyl-L-methionine = N(3)-methylpseudouridine(1915) in 23S rRNA + S-adenosyl-L-homocysteine + H(+). Specifically methylates the pseudouridine at position 1915 (m3Psi1915) in 23S rRNA. The chain is Ribosomal RNA large subunit methyltransferase H from Solidesulfovibrio magneticus (strain ATCC 700980 / DSM 13731 / RS-1) (Desulfovibrio magneticus).